Here is a 623-residue protein sequence, read N- to C-terminus: METQASPKDEVAEAVELELEAVIGFNGHVPTGLKCHPDQEHLVYPLGCTILIQAINTQEQNFLHGHGNNVSCVAISKSGLYIASGQVTFMGFKADIILWDYKKRELMARLSLHKGKIEALAFSPNDMYLVSLGGPDDGSVVVWSIAKREAICGSPAAGLNVGNATTVIFSKCRDEMFVTAGNGTIRVWELDLPNRKIWPTECQTGQMKRIVMSISMANDDSFFYLGTTTGDILKMNPRTKLLADTGPAKDKFSLGVSAICCLKMGGLLVGSGDGLLVFCKSPSYKPIKKIQLQGGITSITLRGEGHQFFVGTEESHIYRVNFTNFKETLITTCHFESVEDIVFPFGTAELFATCAKKDIRVWHTLTNRELLRITVPNMTCHGIDFMRDGKSIISAWDDGRIRAFAPETGRLMYVINNAHRIGVTAIATTSDCKRVISGGGEGEVRVWHIGHQTQKLEEALKEHKSSVSCIRVKKSNEECVTASTDGTCIIWDLVRLRRNQMILANTLFQCVCYHPEEFQIITSGTDRKIAYWEVFDGSVIRELDGSLSGAVNGMDITVEGVHFVTGGNDHLVKVWDYNEGEVTHVGVGHSGNITRIRISPGNQYIVSVSADGAILRWKYPFPS.

11 WD repeats span residues 65–109 (GHGN…LMAR), 112–153 (LHKG…AICG), 159–198 (LNVG…RKIW), 291–330 (QLQG…ETLI), 333–372 (CHFE…ELLR), 375–414 (VPNM…LMYV), 418–457 (AHRI…QKLE), 462–501 (EHKS…RNQM), 503–544 (LANT…RELD), 546–585 (SLSG…VTHV), and 588–623 (GHSG…PFPS).

Belongs to the CFAP52 family. In terms of assembly, microtubule inner protein component of sperm flagellar doublet microtubules. Interacts with BRCA2. Interacts with the CCT chaperonin complex. Interacts with HSP70. Interacts with AK8. Interacts with CFAP45. Interacts with DNAI1. Interacts with IQDC. As to expression, expressed in trachea multiciliated cells.

The protein resides in the cytoplasm. Its subcellular location is the cytoskeleton. The protein localises to the cilium axoneme. It is found in the flagellum axoneme. In terms of biological role, microtubule inner protein (MIP) part of the dynein-decorated doublet microtubules (DMTs) in cilia axoneme. Important for proper ciliary and flagellar beating. May act in cooperation with CFAP45 and axonemal dynein subunit DNAH11. May play a role in cell growth and/or survival. The protein is Cilia- and flagella-associated protein 52 (CFAP52) of Bos taurus (Bovine).